The primary structure comprises 562 residues: MDVRELALKHALRNAYLHGGKAQLKPVVTAVLAESPELRPKVKEIIPIIKEVVEEVNRMSLEEQERILKERFPEALEERKKETRKGLPPLPNAERGKVKTRFAPNPDFYMTLGNARPAIISYEYAKAYEGRFVLRFEDTDPRTKRPLPEAYEAIKEDLSWLGIGWDEEYYQSQRMEVYYGLLRELVRRGGAYVCTCPPEEWRKLRDEGKPCPHRDLPPEEQEELLDQVLEGKFGEGEAVVRVKTDLRHPDPSVRDWVAFRIIDTSKHPHPLTGDKYVLWPTYNFAAGVDDYLMGITHVLRAREHRQNTVKQEFLYKHLGWTMPTVIHFGRLKLEGFVLSKSKMREAGFKGDDPRAATIRGLRRRGFAPEAIREVMLSVGIKSSDASISFANLAAENKKVIDKKAYRVMAVEDPAPAKLLAPEPLEAELPWHPTEGLGSRKYSVEPGEVVYLERADLRRAKRRGGLRLMELANFKYKGFDEDEGVYLLEFESKELDKEKGYDIVQWVKDPKGAIVWRPGERKSFALVEPEALKLEGWVQLIRKGYAKVDGVEEDTLNLIYLHE.

The 'HIGH' region motif lies at 104-114; it reads PNPDFYMTLGN.

This sequence belongs to the class-I aminoacyl-tRNA synthetase family. Glutamate--tRNA ligase type 2 subfamily.

The protein resides in the cytoplasm. The enzyme catalyses tRNA(Glu) + L-glutamate + ATP = L-glutamyl-tRNA(Glu) + AMP + diphosphate. Functionally, catalyzes the attachment of glutamate to tRNA(Glu) in a two-step reaction: glutamate is first activated by ATP to form Glu-AMP and then transferred to the acceptor end of tRNA(Glu). The polypeptide is Glutamate--tRNA ligase (Ignicoccus hospitalis (strain KIN4/I / DSM 18386 / JCM 14125)).